The primary structure comprises 155 residues: 3-hydroxyacyl-[acyl-carrier-protein] dehydratase FabZ (155 aa).

Residue H58 is part of the active site.

It belongs to the thioester dehydratase family. FabZ subfamily.

It is found in the cytoplasm. It carries out the reaction a (3R)-hydroxyacyl-[ACP] = a (2E)-enoyl-[ACP] + H2O. Its function is as follows. Involved in unsaturated fatty acids biosynthesis. Catalyzes the dehydration of short chain beta-hydroxyacyl-ACPs and long chain saturated and unsaturated beta-hydroxyacyl-ACPs. This is 3-hydroxyacyl-[acyl-carrier-protein] dehydratase FabZ from Rhizobium etli (strain ATCC 51251 / DSM 11541 / JCM 21823 / NBRC 15573 / CFN 42).